The following is a 644-amino-acid chain: SURP and G-patch domain-containing protein 1 (644 aa).

The span at 44-54 (REIEARMEQKA) shows a compositional bias: basic and acidic residues. Disordered stretches follow at residues 44 to 74 (REIE…ADAQ) and 98 to 122 (AQAS…KRPL). A Phosphothreonine modification is found at T128. One copy of the SURP motif 1 repeat lies at 188–230 (VIEKLARFVAEGGPELEKVAMEDYKDNPAFTFLHDKNSREFLY). Position 253 is a phosphoserine (S253). An SURP motif 2 repeat occupies 263 to 306 (LAEKLARFIADGGPEVETIALQNNRENQAFSFLYDPNSQGYRYY). Disordered stretches follow at residues 316–342 (AKAG…PEAL) and 360–412 (PAVN…PSPL). Position 323 is a phosphoserine (S323). Residues 360-369 (PAVNPTPSIP) show a composition bias toward pro residues. The short motif at 379–385 (KRKRKSR) is the Nuclear localization signal element. Phosphoserine occurs at positions 408, 410, 413, and 484. In terms of domain architecture, G-patch spans 561–608 (VENIGYQMLMKMGWKEGEGLGTEGQGIKNPVNKGATTIDGAGFGIDRP).

As to quaternary structure, component of the spliceosome.

The protein resides in the nucleus. In terms of biological role, plays a role in pre-mRNA splicing. The protein is SURP and G-patch domain-containing protein 1 (Sugp1) of Rattus norvegicus (Rat).